Reading from the N-terminus, the 705-residue chain is Rab guanine nucleotide exchange factor sec2 (705 aa).

The stretch at 144-285 (QTTLDDNLVA…KSVMQGMNIA (142 aa)) forms a coiled coil.

It belongs to the SEC2 family.

In terms of biological role, guanine nucleotide exchange factor that plays an important role in regulating the growth and virulence, probably by regulating the autophagy pathway. Affects the sensitivity to cell wall disruptors and the cell wall thickness by regulating the expression levels of the cell wall integrity (CWI) pathway genes, thus coordinating the growth and virulence. Positively regulates the autophagy pathway to enhance the expression of CWI pathway genes in the presence of autophagy inducers. The chain is Rab guanine nucleotide exchange factor sec2 from Aspergillus fumigatus (strain ATCC MYA-4609 / CBS 101355 / FGSC A1100 / Af293) (Neosartorya fumigata).